Consider the following 180-residue polypeptide: uncharacterized protein (180 aa).

An HTH dtxR-type domain is found at Arg17–Thr80.

It belongs to the DtxR/MntR family.

This is an uncharacterized protein from Aeropyrum pernix (strain ATCC 700893 / DSM 11879 / JCM 9820 / NBRC 100138 / K1).